We begin with the raw amino-acid sequence, 51 residues long: Lantibiotic lacticin-481 (51 aa).

The propeptide occupies 1-24; the sequence is MKEQNSFNLLQEVTESELDLILGA. The segment at residues 33–38 is a cross-link (beta-methyllanthionine (Thr-Cys)); sequence TISHEC. 2 cross-links (lanthionine (Ser-Cys)) span residues 35–49 and 42–50; these read SHEC…VFTC and SWQFVFTCC. At threonine 48 the chain carries (Z)-2,3-didehydrobutyrine.

It belongs to the type A lantibiotic family. Monomer or homodimer. Post-translationally, maturation of lantibiotics involves the enzymatic conversion of Thr, and Ser into dehydrated AA and the formation of thioether bonds with cysteine. This is followed by membrane translocation and cleavage of the modified precursor. It is established that the 2,3-didehydrobutyrine is the Z-isomer.

Its function is as follows. Lanthionine-containing peptide antibiotic (lantibiotic) active on Gram-positive bacteria. The bactericidal activity of lantibiotics is based on depolarization of energized bacterial cytoplasmic membranes, initiated by the formation of aqueous transmembrane pores. Lacticin 481 is a broad spectrum bacteriocin exhibiting activity against a wide range of lactic acid bacteria and C.tyrobutyricum. The sequence is that of Lantibiotic lacticin-481 (lctA) from Lactococcus lactis subsp. lactis (Streptococcus lactis).